The following is a 195-amino-acid chain: Imidazoleglycerol-phosphate dehydratase (195 aa).

This sequence belongs to the imidazoleglycerol-phosphate dehydratase family.

The protein resides in the cytoplasm. It catalyses the reaction D-erythro-1-(imidazol-4-yl)glycerol 3-phosphate = 3-(imidazol-4-yl)-2-oxopropyl phosphate + H2O. Its pathway is amino-acid biosynthesis; L-histidine biosynthesis; L-histidine from 5-phospho-alpha-D-ribose 1-diphosphate: step 6/9. In Thermotoga maritima (strain ATCC 43589 / DSM 3109 / JCM 10099 / NBRC 100826 / MSB8), this protein is Imidazoleglycerol-phosphate dehydratase.